The following is a 767-amino-acid chain: 5-methyltetrahydropteroyltriglutamate--homocysteine methyltransferase (767 aa).

5-methyltetrahydropteroyltri-L-glutamate contacts are provided by residues R16 to K19 and K122. L-homocysteine is bound by residues I443–S445 and E496. L-methionine contacts are provided by residues I443–S445 and E496. 5-methyltetrahydropteroyltri-L-glutamate contacts are provided by residues R527 to C528 and W573. Residue D611 participates in L-homocysteine binding. D611 lines the L-methionine pocket. A 5-methyltetrahydropteroyltri-L-glutamate-binding site is contributed by E617. Residues H653, C655, and E677 each contribute to the Zn(2+) site. The active-site Proton donor is H706. C738 contributes to the Zn(2+) binding site.

It belongs to the vitamin-B12 independent methionine synthase family. The cofactor is Zn(2+).

It carries out the reaction 5-methyltetrahydropteroyltri-L-glutamate + L-homocysteine = tetrahydropteroyltri-L-glutamate + L-methionine. The protein operates within amino-acid biosynthesis; L-methionine biosynthesis via de novo pathway; L-methionine from L-homocysteine (MetE route): step 1/1. Catalyzes the transfer of a methyl group from 5-methyltetrahydrofolate to homocysteine resulting in methionine formation. The chain is 5-methyltetrahydropteroyltriglutamate--homocysteine methyltransferase from Ectopseudomonas mendocina (strain ymp) (Pseudomonas mendocina).